The sequence spans 209 residues: uncharacterized protein (209 aa).

4Fe-4S ferredoxin-type domains are found at residues 38 to 67 (KTKP…IFSF), 63 to 92 (KIFS…KDRF), 90 to 119 (DRFT…KEIP), 122 to 151 (KTPV…EINP), 145 to 174 (INKE…TPDE), and 179 to 209 (LIVK…HRES). Positions 47, 50, 53, 57, 72, 75, 78, 82, 99, 102, 105, and 109 each coordinate [4Fe-4S] cluster. [4Fe-4S] cluster-binding residues include C154, C157, C160, C164, C188, C191, C194, and C198.

This is an uncharacterized protein from Methanocaldococcus jannaschii (strain ATCC 43067 / DSM 2661 / JAL-1 / JCM 10045 / NBRC 100440) (Methanococcus jannaschii).